Here is a 226-residue protein sequence, read N- to C-terminus: ATP synthase F(0) complex subunit a (226 aa).

6 helical membrane-spanning segments follow: residues 14–34 (ILGI…FSAP), 68–88 (WTLM…LGLL), 97–117 (QLSM…LMGF), 138–158 (IPML…ALAV), 164–184 (ITAG…LSSI), and 193–213 (FTIL…QAYV).

Belongs to the ATPase A chain family. As to quaternary structure, component of the ATP synthase complex composed at least of ATP5F1A/subunit alpha, ATP5F1B/subunit beta, ATP5MC1/subunit c (homooctomer), MT-ATP6/subunit a, MT-ATP8/subunit 8, ATP5ME/subunit e, ATP5MF/subunit f, ATP5MG/subunit g, ATP5MK/subunit k, ATP5MJ/subunit j, ATP5F1C/subunit gamma, ATP5F1D/subunit delta, ATP5F1E/subunit epsilon, ATP5PF/subunit F6, ATP5PB/subunit b, ATP5PD/subunit d, ATP5PO/subunit OSCP. ATP synthase complex consists of a soluble F(1) head domain (subunits alpha(3) and beta(3)) - the catalytic core - and a membrane F(0) domain - the membrane proton channel (subunits c, a, 8, e, f, g, k and j). These two domains are linked by a central stalk (subunits gamma, delta, and epsilon) rotating inside the F1 region and a stationary peripheral stalk (subunits F6, b, d, and OSCP). Interacts with DNAJC30; interaction is direct.

It localises to the mitochondrion inner membrane. The catalysed reaction is H(+)(in) = H(+)(out). Its function is as follows. Subunit a, of the mitochondrial membrane ATP synthase complex (F(1)F(0) ATP synthase or Complex V) that produces ATP from ADP in the presence of a proton gradient across the membrane which is generated by electron transport complexes of the respiratory chain. ATP synthase complex consist of a soluble F(1) head domain - the catalytic core - and a membrane F(1) domain - the membrane proton channel. These two domains are linked by a central stalk rotating inside the F(1) region and a stationary peripheral stalk. During catalysis, ATP synthesis in the catalytic domain of F(1) is coupled via a rotary mechanism of the central stalk subunits to proton translocation. With the subunit c (ATP5MC1), forms the proton-conducting channel in the F(0) domain, that contains two crucial half-channels (inlet and outlet) that facilitate proton movement from the mitochondrial intermembrane space (IMS) into the matrix. Protons are taken up via the inlet half-channel and released through the outlet half-channel, following a Grotthuss mechanism. This Tachyglossus aculeatus aculeatus (Southeast Australian short-beaked echidna) protein is ATP synthase F(0) complex subunit a.